The chain runs to 123 residues: Iron-sulfur cluster insertion protein ErpA (123 aa).

Iron-sulfur cluster-binding residues include Cys-51, Cys-115, and Cys-117.

The protein belongs to the HesB/IscA family. As to quaternary structure, homodimer. It depends on iron-sulfur cluster as a cofactor.

Its function is as follows. Required for insertion of 4Fe-4S clusters for at least IspG. This chain is Iron-sulfur cluster insertion protein ErpA, found in Halorhodospira halophila (strain DSM 244 / SL1) (Ectothiorhodospira halophila (strain DSM 244 / SL1)).